A 214-amino-acid polypeptide reads, in one-letter code: Putative pyrophosphatase PpaX (214 aa).

Aspartate 8 serves as the catalytic Nucleophile.

It belongs to the HAD-like hydrolase superfamily. PpaX family. The cofactor is Mg(2+).

The enzyme catalyses diphosphate + H2O = 2 phosphate + H(+). This is Putative pyrophosphatase PpaX from Clostridium perfringens (strain 13 / Type A).